Reading from the N-terminus, the 298-residue chain is GTPase Era (298 aa).

The 168-residue stretch at 7–174 folds into the Era-type G domain; that stretch reads RSGFVSIIGR…VELVRKALPQ (168 aa). Positions 15-22 are G1; sequence GRPNVGKS. 15 to 22 is a GTP binding site; sequence GRPNVGKS. The interval 41–45 is G2; sequence QTTRN. The G3 stretch occupies residues 62 to 65; the sequence is DTPG. GTP contacts are provided by residues 62-66 and 124-127; these read DTPGI and NKVD. The segment at 124–127 is G4; the sequence is NKVD. The G5 stretch occupies residues 153-155; the sequence is ISA. The 79-residue stretch at 205-283 folds into the KH type-2 domain; that stretch reads TRDEVPYATA…FLELFVRVRK (79 aa).

Belongs to the TRAFAC class TrmE-Era-EngA-EngB-Septin-like GTPase superfamily. Era GTPase family. Monomer.

The protein localises to the cytoplasm. It localises to the cell inner membrane. Functionally, an essential GTPase that binds both GDP and GTP, with rapid nucleotide exchange. Plays a role in 16S rRNA processing and 30S ribosomal subunit biogenesis and possibly also in cell cycle regulation and energy metabolism. The protein is GTPase Era of Geobacter metallireducens (strain ATCC 53774 / DSM 7210 / GS-15).